Here is a 516-residue protein sequence, read N- to C-terminus: Keratin, type II cuticular Hb2 (516 aa).

A head region spans residues 1–118 (MSCRNFQLSP…PTVQRVKRDE (118 aa)). The 312-residue stretch at 118 to 429 (EKEQIKCLNN…RLLEGEEHRL (312 aa)) folds into the IF rod domain. Residues 119–153 (KEQIKCLNNRFASFINKVRFLEQKNKLLETKWNFM) form a coil 1A region. Residues 154–163 (QQQRSCQSNM) are linker 1. Residues 164–264 (EPLFEGYICA…FEEEIGLLQS (101 aa)) are coil 1B. Positions 265 to 281 (QISETSVIVKMDNSREL) are linker 12. The segment at 282–425 (DVDGIVAEIK…ATYRRLLEGE (144 aa)) is coil 2. The tract at residues 426-516 (EHRLCEGIGP…VGVGSNSCSR (91 aa)) is tail.

This sequence belongs to the intermediate filament family. As to quaternary structure, heterotetramer of two type I and two type II keratins.

The protein is Keratin, type II cuticular Hb2 (Krt82) of Mus musculus (Mouse).